The primary structure comprises 171 residues: MPRSQRNDNFIDKTFTIAADILLRVIPTTRREKEAFTYYRDGMSAQSEGEYAEALQNYYKAMRLEIDPYDRSYILYNIGLIHTSNGEHAKALEYYFQALERNPSLPQAFNNMAVICHYRGEQAIQQGDPGTSEIWFDKAAEYWKQAIALAPNNYIEAQNWLRITGRSEDWE.

TPR repeat units lie at residues A35 to P68, S72 to L105, and G120 to N153.

This sequence belongs to the Ycf3 family.

The protein localises to the plastid. It is found in the chloroplast thylakoid membrane. In terms of biological role, essential for the assembly of the photosystem I (PSI) complex. May act as a chaperone-like factor to guide the assembly of the PSI subunits. This Psilotum nudum (Whisk fern) protein is Photosystem I assembly protein Ycf3.